The chain runs to 372 residues: Methylthioribose-1-phosphate isomerase 2 (372 aa).

Asp254 (proton donor) is an active-site residue.

It belongs to the eIF-2B alpha/beta/delta subunits family. MtnA subfamily.

It is found in the cytoplasm. The protein localises to the nucleus. The enzyme catalyses 5-(methylsulfanyl)-alpha-D-ribose 1-phosphate = 5-(methylsulfanyl)-D-ribulose 1-phosphate. It participates in amino-acid biosynthesis; L-methionine biosynthesis via salvage pathway; L-methionine from S-methyl-5-thio-alpha-D-ribose 1-phosphate: step 1/6. In terms of biological role, catalyzes the interconversion of methylthioribose-1-phosphate (MTR-1-P) into methylthioribulose-1-phosphate (MTRu-1-P). This chain is Methylthioribose-1-phosphate isomerase 2, found in Trypanosoma cruzi (strain CL Brener).